Here is a 256-residue protein sequence, read N- to C-terminus: Enoyl-[acyl-carrier-protein] reductase [NADPH] FabI (256 aa).

NADP(+) is bound by residues glycine 13, 19–20 (SI), 40–44 (RKERS), 66–67 (DV), and isoleucine 94. Alanine 97 is a binding site for substrate. Residues tyrosine 147 and tyrosine 157 each act as proton acceptor in the active site. Residues lysine 164 and 193–197 (IRTLS) each bind NADP(+).

The protein belongs to the short-chain dehydrogenases/reductases (SDR) family. FabI subfamily. Homotetramer.

It carries out the reaction a 2,3-saturated acyl-[ACP] + NADP(+) = a (2E)-enoyl-[ACP] + NADPH + H(+). It functions in the pathway lipid metabolism; fatty acid biosynthesis. Catalyzes the reduction of a carbon-carbon double bond in an enoyl moiety that is covalently linked to an acyl carrier protein (ACP). Involved in the elongation cycle of fatty acid which are used in the lipid metabolism. In Staphylococcus aureus (strain MRSA252), this protein is Enoyl-[acyl-carrier-protein] reductase [NADPH] FabI (fabI).